A 635-amino-acid polypeptide reads, in one-letter code: S-type anion channel SLAH3 (635 aa).

At 1–253 (MEEKPNYVIQ…IVLPNDKKWP (253 aa)) the chain is on the cytoplasmic side. Residues 102-121 (SDPTTSLSSENHKNSGSTGK) are compositionally biased toward polar residues. Residues 102 to 173 (SDPTTSLSSE…SGHHQNQNQA (72 aa)) are disordered. Residues 153 to 165 (NHHHHLHRQHQSG) show a composition bias toward basic residues. At S189 the chain carries Phosphoserine. The disordered stretch occupies residues 193-217 (ERQFTRKPASVEPEAPNRNNQNLNT). A helical membrane pass occupies residues 254–276 (FLLRYPISTFGMCLGVSSQAIMW). Residues 277 to 299 (KTLATAEPTKFLHVPLWINQGLW) are Extracellular-facing. A helical transmembrane segment spans residues 300 to 320 (FISVALILTIATIYLLKIILF). Topologically, residues 321 to 335 (FEAVRREYYHPIRIN) are cytoplasmic. A helical membrane pass occupies residues 336-356 (FFFAPFISLLFLALGVPPSII). Over 357 to 358 (TD) the chain is Extracellular. Residues 359 to 379 (LPHFLWYLLMFPFICLELKIY) form a helical membrane-spanning segment. Residues 380-396 (GQWMSGGQRRLSRVANP) lie on the Cytoplasmic side of the membrane. The helical transmembrane segment at 397 to 417 (TNHLSVVGNFVGALLGASMGL) threads the bilayer. Residues 418–419 (RE) lie on the Extracellular side of the membrane. The helical transmembrane segment at 420–440 (GPIFFYAVGMAHYLVLFVTLY) threads the bilayer. The Cytoplasmic portion of the chain corresponds to 441-455 (QRLPTNETLPKDLHP). Residues 456-476 (VFFLFVAAPSVASMAWAKVTG) traverse the membrane as a helical segment. Residue S477 is a topological domain, extracellular. A helical membrane pass occupies residues 478 to 498 (FDYGSKVCYFIAIFLYFSLAV). Residues 499–504 (RINFFR) are Cytoplasmic-facing. The chain crosses the membrane as a helical span at residues 505-525 (GIKFSLSWWAYTFPMTGAAIA). The Extracellular segment spans residues 526-541 (TIRYATVVKSTMTQIM). Residues 542–562 (CVVLCAIATLVVFALLVTTII) form a helical membrane-spanning segment. Topologically, residues 563–635 (HAFVLRDLFP…NGKTQESDSS (73 aa)) are cytoplasmic. The tract at residues 611 to 635 (FTDSDSSQSNDVEACNGKTQESDSS) is disordered. Residues 614-635 (SDSSQSNDVEACNGKTQESDSS) are compositionally biased toward polar residues.

This sequence belongs to the SLAC1 S-type anion channel family. Homotrimer. Interacts with KAT1. As to expression, expressed in the whole plant, escpecially in vascular systems.

It localises to the cell membrane. Its function is as follows. Slow, weak voltage-dependent S-type anion efflux channel involved in maintenance of anion homeostasis. Binds to the highly selective inward-rectifying potassium channel KAT1 and inhibits its activity. Functions as an essential negative regulator of inward potassium channels in guard cells. Essential for the efficient stomatal closure and opening in guard cells. The polypeptide is S-type anion channel SLAH3 (SLAH3) (Arabidopsis thaliana (Mouse-ear cress)).